The following is a 770-amino-acid chain: Pheromone-regulated membrane protein 10 (770 aa).

Disordered regions lie at residues Met1 to Asp125 and Asn139 to Glu169. 2 stretches are compositionally biased toward polar residues: residues Ser49–Asn63 and Asp78–Thr93. A compositionally biased stretch (basic and acidic residues) spans Glu155 to Glu169. 10 consecutive transmembrane segments (helical) span residues Trp453–Gly473, Trp475–Leu495, Val505–Pro525, Ile529–Leu549, Phe568–Phe588, Leu604–Leu624, Ile629–Ala649, Phe659–Trp679, Gly681–Ser701, and Ile740–Phe760.

Belongs to the ThrE exporter (TC 2.A.79) family.

It localises to the membrane. In Saccharomyces cerevisiae (strain YJM789) (Baker's yeast), this protein is Pheromone-regulated membrane protein 10 (PRM10).